Reading from the N-terminus, the 354-residue chain is Peptide-N(4)-(N-acetyl-beta-D-glucosaminyl)asparagine amidase F (354 aa).

A signal peptide spans 1–40 (MRKLLIFSISAYLMAGIVSCKGVDSATPVTEDRLALNAVN). An intrachain disulfide couples Cys91 to Cys96. Catalysis depends on residues Asp100, Glu158, and Glu246. Intrachain disulfides connect Cys244–Cys248 and Cys271–Cys292.

As to quaternary structure, monomer.

It carries out the reaction Hydrolysis of an N(4)-(acetyl-beta-D-glucosaminyl)asparagine residue in which the glucosamine residue may be further glycosylated, to yield a (substituted) N-acetyl-beta-D-glucosaminylamine and a peptide containing an aspartate residue.. Its function is as follows. Cleaves an entire glycan from a glycoprotein. Requires that the glycosylated asparagine moiety (reaction 1) be substituted on its amino (R1) and carboxyl (R2) terminus with a polypeptide chain. This Elizabethkingia miricola (Chryseobacterium miricola) protein is Peptide-N(4)-(N-acetyl-beta-D-glucosaminyl)asparagine amidase F (ngl).